Reading from the N-terminus, the 628-residue chain is WW domain-containing adapter protein with coiled-coil (628 aa).

Disordered stretches follow at residues M1 to S130, E152 to P338, and N417 to S532. Positions S37 to T49 are enriched in basic and acidic residues. Residues G74 to V84 are compositionally biased toward basic residues. Low complexity predominate over residues N101 to S121. Residues Y123–E156 form the WW domain. 2 stretches are compositionally biased toward basic and acidic residues: residues E152–S168 and P176–A185. Residues D199 to S213 are compositionally biased toward polar residues. The span at R214–S227 shows a compositional bias: basic and acidic residues. Composition is skewed to low complexity over residues S230–P260 and S299–V331. The span at P420–V446 shows a compositional bias: polar residues. The segment covering G467 to K486 has biased composition (low complexity). Positions P511–S532 are enriched in polar residues. The stretch at Q599–S625 forms a coiled coil.

The protein resides in the nucleus. Functionally, acts as a linker between gene transcription and histone H2B monoubiquitination at 'Lys-120' (H2BK120ub1). Positive regulator of amino acid starvation-induced autophagy. Positively regulates MTOR activity. May negatively regulate the ubiquitin proteasome pathway. In Xenopus tropicalis (Western clawed frog), this protein is WW domain-containing adapter protein with coiled-coil (wac).